The chain runs to 54 residues: Photosystem II reaction center protein K (54 aa).

The propeptide occupies 1-17 (MLLEHVTITLLNNTSFA). A helical membrane pass occupies residues 29-49 (LIDVLPIIPLLFLLLAFVWQA).

This sequence belongs to the PsbK family. As to quaternary structure, PSII is composed of 1 copy each of membrane proteins PsbA, PsbB, PsbC, PsbD, PsbE, PsbF, PsbH, PsbI, PsbJ, PsbK, PsbL, PsbM, PsbT, PsbY, PsbZ, Psb30/Ycf12, at least 3 peripheral proteins of the oxygen-evolving complex and a large number of cofactors. It forms dimeric complexes.

The protein localises to the plastid. Its subcellular location is the chloroplast thylakoid membrane. One of the components of the core complex of photosystem II (PSII). PSII is a light-driven water:plastoquinone oxidoreductase that uses light energy to abstract electrons from H(2)O, generating O(2) and a proton gradient subsequently used for ATP formation. It consists of a core antenna complex that captures photons, and an electron transfer chain that converts photonic excitation into a charge separation. The protein is Photosystem II reaction center protein K of Euglena mutabilis.